Here is a 2609-residue protein sequence, read N- to C-terminus: Beige protein homolog 1 (2609 aa).

2 disordered regions span residues Asp-1654–Ser-1679 and Ile-1691–Thr-1729. Acidic residues predominate over residues Met-1711–Lys-1723. The 136-residue stretch at Glu-1735–Val-1870 folds into the BEACH-type PH domain. The BEACH domain occupies Ala-1907–Arg-2202. WD repeat units follow at residues Lys-2249–Met-2290, Leu-2294–Ala-2332, Gly-2340–Ser-2379, Asn-2429–Leu-2475, and Ala-2507–His-2546. The FYVE-type zinc-finger motif lies at Asp-2550–Pro-2604.

Its subcellular location is the cytoplasm. It localises to the membrane. In terms of biological role, may be involved in protein sorting and cell wall formation. This is Beige protein homolog 1 (lvs1) from Schizosaccharomyces pombe (strain 972 / ATCC 24843) (Fission yeast).